A 220-amino-acid chain; its full sequence is MNVILFGPPGAGKGTQAQYVVERFGIPQISTGDMLRAAVKNCTPLGLKAKEIMDAGGLVSDEIVLGIVADRLSCEDCGTGFVLDGFPRTIPQAEALIEILACLGKQTDHVISLEVSNDEITRRLSGRRTCPSCGKGFHVLFAPPRKAGVCDFCGADLVQRGDDHPESICNRLSVYEKQTSPLKAFYAQKGLLRAVDGSLPVEQIQLQIRKVLEGCSSDCA.

ATP is bound at residue G10–T15. The interval S30–V59 is NMP. AMP contacts are provided by residues T31, R36, G57–V59, G85–R88, and Q92. Positions G126 to D163 are LID. Position 127 (R127) interacts with ATP. Residues C130, C133, C150, and C153 each coordinate Zn(2+). The AMP site is built by R160 and R171. Residue L199 coordinates ATP.

Belongs to the adenylate kinase family. In terms of assembly, monomer.

The protein resides in the cytoplasm. The catalysed reaction is AMP + ATP = 2 ADP. It functions in the pathway purine metabolism; AMP biosynthesis via salvage pathway; AMP from ADP: step 1/1. Functionally, catalyzes the reversible transfer of the terminal phosphate group between ATP and AMP. Plays an important role in cellular energy homeostasis and in adenine nucleotide metabolism. The sequence is that of Adenylate kinase from Pelobacter propionicus (strain DSM 2379 / NBRC 103807 / OttBd1).